The primary structure comprises 806 residues: MKFTAIVGTTSPKSYNRTLLQFMQAHFKDKADIELLEIDQVPMFNQDQPSTNPQLLEINQKIIASDGVIIATPEYNHSIPSSLKSVLEWLSYELHPLDGKPVMILGASIDAQGSSRAQLHLRQILDAPGVNANVMPGYEFLLGNAHQAFDDKGQLNNEATIDFLEICFFRFMRFAKISNQLNVEEDFSFAPGTYEVHALGHGGALPMQVSFSEKKIESIHIDTAGETEGLADVVFVRIPDKIIEGQTLNVDALSGASETSHAVIDGVAKAVKLAGVNPDILKKRPKPASSLNRDDEEYSCDVVVIGGGGAGLSAAATVLQAGKNAIVLEKFPAVGGNTIRTGGPINAADPEWQRTFDENPGERHTIEALLSTDESEIHPEYLADFRALKEEFAAYQQQFGDQKGYLFDSPLLHRMQTYFGGKRTDLEGNSIYGQYDLVKILTDHALESVQWLEEIGVEYDKEVVFAPVGALWRRGHKPVKRYGTAFILALSRYIESMSGTILTDSPAKEFLIEDGEIKGVIATGVNGQKITIHAKAVVLASGGFGANTKMLQQYNTYWSHIADDIKTTNSYAMTGDGIVLGQSVGAGLIGMGFTQMMPVADPNTGELFSGLQVPPENFVIVNQQGKRFVNEFAGRDVLTKAALAEGGLFYLIADDEIKKTAANTSQEKIDRQVEAGTLFRADTLEELAVQVGMEPDVLVETINKYNRYVEAGHDPEFHKDTFSLKVEKAPFYATPRQPAVHHTMGGLKIDTATRVLNENNRPIKHLYAAGEVAGGIHAGNRLGGNALADIFTFGRIAGKTAMSEMD.

Ser-257 carries the FMN phosphoryl serine modification. FAD contacts are provided by Ala-310, Glu-329, Asn-337, Thr-338, Gly-342, Gly-343, and Asp-576. Arg-635 (proton donor) is an active-site residue. Residues His-742, Glu-771, Ala-786, and Leu-787 each contribute to the FAD site.

Belongs to the FAD-dependent oxidoreductase 2 family. FRD/SDH subfamily. As to quaternary structure, NADH:(hydroxy)cinnamate reductase Crd is a heterodimer composed of CrdA and CrdB subunits, encoded by adjacent genes. FAD is required as a cofactor. Requires FMN as cofactor. In terms of processing, is flavinylated on Ser-257 by ApbE, encoded in a neighboring gene. Covalent attachment of FMN is essential for catalytic activity.

The catalysed reaction is 3-phenylpropanoate + NAD(+) = (E)-cinnamate + NADH + H(+). It carries out the reaction 3-(3,4-dihydroxyphenyl)propanoate + NAD(+) = (E)-caffeate + NADH + H(+). The enzyme catalyses phloretate + NAD(+) = (E)-4-coumarate + NADH + H(+). It catalyses the reaction dihydroferulate + NAD(+) = (E)-ferulate + NADH + H(+). Is inactivated by molecular oxygen, allowing regulation of Crd activity by medium oxygen level. Functionally, component of the NADH:(hydroxy)cinnamate reductase Crd that catalyzes the reduction of the double bond in cinnamate, p-coumarate, caffeate, and ferulate under anaerobic conditions with NADH or methyl viologen as the electron donor. Is moderately active against acrylate and practically inactive against urocanate, fumarate, methacrylate and crotonate. CrdB is the catalytic subunit that binds substrates. Is likely involved in protecting V.ruber from (hydroxy)cinnamate poisoning. This Vibrio ruber (strain DSM 16370 / JCM 11486 / BCRC 17186 / CECT 7878 / LMG 23124 / VR1) protein is NADH:(hydroxy)cinnamate reductase subunit CrdB.